Here is a 269-residue protein sequence, read N- to C-terminus: tRNA pseudouridine synthase A (269 aa).

Asp55 (nucleophile) is an active-site residue. Tyr111 lines the substrate pocket.

This sequence belongs to the tRNA pseudouridine synthase TruA family.

It carries out the reaction uridine(38/39/40) in tRNA = pseudouridine(38/39/40) in tRNA. Formation of pseudouridine at positions 38, 39 and 40 in the anticodon stem and loop of transfer RNAs. The polypeptide is tRNA pseudouridine synthase A (Methanosarcina mazei (strain ATCC BAA-159 / DSM 3647 / Goe1 / Go1 / JCM 11833 / OCM 88) (Methanosarcina frisia)).